Reading from the N-terminus, the 570-residue chain is Pyruvate decarboxylase (570 aa).

Residues 1-2 (MV) constitute a propeptide, removed in mature form. Residues Asp33 and His120 each coordinate substrate. The segment at 394–476 (DSWFNGIQLK…MLINNRGYTI (83 aa)) is thiamine pyrophosphate binding. Mg(2+) is bound by residues Asp444, Asn471, and Gly473. Residue Glu477 participates in substrate binding.

The protein belongs to the TPP enzyme family. In terms of assembly, homomer. It depends on a metal cation as a cofactor. Thiamine diphosphate is required as a cofactor.

It localises to the cytoplasm. The enzyme catalyses a 2-oxocarboxylate + H(+) = an aldehyde + CO2. It participates in carbohydrate metabolism; pyruvate metabolism. The protein is Pyruvate decarboxylase (cfp) of Neurospora crassa (strain ATCC 24698 / 74-OR23-1A / CBS 708.71 / DSM 1257 / FGSC 987).